The primary structure comprises 548 residues: uncharacterized protein (548 aa).

2 short-chain dehydrogenase/reductase regions span residues 1 to 250 (MDDR…WMSV) and 271 to 548 (PVED…LLSP). 12–37 (IVVTGAAGGIGRALVDIFAANGDVVV) serves as a coordination point for NADP(+). Position 141 (Ser141) interacts with substrate. Tyr154 (proton acceptor) is an active-site residue. 280–304 (VIVMGGATGVGAAIARRFAENGDTV) is a binding site for NADP(+). The Proton acceptor role is filled by Tyr420.

This sequence belongs to the short-chain dehydrogenases/reductases (SDR) family.

This is an uncharacterized protein from Sinorhizobium fredii (strain NBRC 101917 / NGR234).